We begin with the raw amino-acid sequence, 499 residues long: Putative DBH-like monooxygenase protein 2 (499 aa).

The N-terminal stretch at 1 to 16 is a signal peptide; the sequence is MAHDLLFRLFPLLALG. In terms of domain architecture, DOMON spans 40–156; the sequence is NVIFLRWDFD…NTVRVLAAYG (117 aa). Tyrosine 209 is an active-site residue. 2 cysteine pairs are disulfide-bonded: cysteine 211-cysteine 261 and cysteine 248-cysteine 271. A glycan (N-linked (GlcNAc...) asparagine) is linked at asparagine 236. 2 residues coordinate Cu cation: histidine 241 and histidine 242. N-linked (GlcNAc...) asparagine glycosylation is present at asparagine 250. Residues histidine 308, histidine 389, and histidine 391 each coordinate Cu cation. 2 cysteine pairs are disulfide-bonded: cysteine 365-cysteine 480 and cysteine 443-cysteine 465. The active site involves histidine 389. An N-linked (GlcNAc...) asparagine glycan is attached at asparagine 404. Position 464 (methionine 464) interacts with Cu cation. N-linked (GlcNAc...) asparagine glycosylation is present at asparagine 476.

Belongs to the copper type II ascorbate-dependent monooxygenase family. Cu(2+) is required as a cofactor.

This chain is Putative DBH-like monooxygenase protein 2 (MOXD2P), found in Homo sapiens (Human).